Here is a 421-residue protein sequence, read N- to C-terminus: MDSILVTGNGPLNGQIPIAGAKNACLTLMPATLLSDEPLTLTNAPRLSDIKTMTLLLQSLGAEVSSLQDGKVLAMSSHDLTSHTADYDIVRKMRASNLVLGPMLARLGQAVVSLPGGCAIGARPMDLHIEALEALGAEIELRDGYLHAKAPGGLKGAVHEMRFASVGATENMVMAATLAKGTTVLKNAAREPEIVDLVRCLRAMGAQIEGEGTSTIEIQGVDRLHGATHQVVTDRIELGTYMLAPAICGGEVELLGGRLDLVGAFVEKLDAAGIDVAETDKGLKVSRRNGRVSAVNVTTEPFPGFPTDLQAQMMALLCTAEGTSVLEEKIFENRFMHAPELTRMGARIEVHGGTATVRGVERLKGAPVMATDLRASVSLILAGLAAEGETLVSRVYHLDRGYEHVVQKLEAVGARIERIKG.

22 to 23 (KN) is a binding site for phosphoenolpyruvate. R94 lines the UDP-N-acetyl-alpha-D-glucosamine pocket. The active-site Proton donor is C118. C118 carries the 2-(S-cysteinyl)pyruvic acid O-phosphothioketal modification. UDP-N-acetyl-alpha-D-glucosamine-binding positions include 123-127 (RPMDL), D308, and I330.

This sequence belongs to the EPSP synthase family. MurA subfamily.

The protein resides in the cytoplasm. The enzyme catalyses phosphoenolpyruvate + UDP-N-acetyl-alpha-D-glucosamine = UDP-N-acetyl-3-O-(1-carboxyvinyl)-alpha-D-glucosamine + phosphate. It participates in cell wall biogenesis; peptidoglycan biosynthesis. Cell wall formation. Adds enolpyruvyl to UDP-N-acetylglucosamine. The sequence is that of UDP-N-acetylglucosamine 1-carboxyvinyltransferase from Ruegeria pomeroyi (strain ATCC 700808 / DSM 15171 / DSS-3) (Silicibacter pomeroyi).